A 226-amino-acid chain; its full sequence is Histidine biosynthesis bifunctional protein HisIE (226 aa).

Residues 1–131 (MMPMNQEFIQ…STFNRPLSNT (131 aa)) are phosphoribosyl-AMP cyclohydrolase. The segment at 132–226 (CSELFEVIKD…KRRQSKSNPK (95 aa)) is phosphoribosyl-ATP pyrophosphohydrolase.

The protein in the N-terminal section; belongs to the PRA-CH family. This sequence in the C-terminal section; belongs to the PRA-PH family.

The protein resides in the cytoplasm. It carries out the reaction 1-(5-phospho-beta-D-ribosyl)-ATP + H2O = 1-(5-phospho-beta-D-ribosyl)-5'-AMP + diphosphate + H(+). The enzyme catalyses 1-(5-phospho-beta-D-ribosyl)-5'-AMP + H2O = 1-(5-phospho-beta-D-ribosyl)-5-[(5-phospho-beta-D-ribosylamino)methylideneamino]imidazole-4-carboxamide. It participates in amino-acid biosynthesis; L-histidine biosynthesis; L-histidine from 5-phospho-alpha-D-ribose 1-diphosphate: step 2/9. It functions in the pathway amino-acid biosynthesis; L-histidine biosynthesis; L-histidine from 5-phospho-alpha-D-ribose 1-diphosphate: step 3/9. The sequence is that of Histidine biosynthesis bifunctional protein HisIE from Prochlorococcus marinus (strain SARG / CCMP1375 / SS120).